The following is a 427-amino-acid chain: A-kinase anchor protein 5 (427 aa).

The tract at residues 1–122 (METTISEIHV…DADLSKKKAK (122 aa)) is disordered. Residues 1–170 (METTISEIHV…LDIQTQTPLN (170 aa)) form an essential to the intracellular anchoring function region. Residues 8–19 (IHVENKDEKRSA) are compositionally biased toward basic and acidic residues. The residue at position 22 (Ser22) is a Phosphoserine. Cys36 is lipidated: S-palmitoyl cysteine. Positions 37–48 (FKRRKKAAKALK) are enriched in basic residues. The AKAP CaM-binding motif lies at 76-96 (RGAWASLKRLVTRRKRSESSK). Residues 92-102 (SESSKQQKPLE) show a composition bias toward basic and acidic residues. Cys129 carries the S-palmitoyl cysteine lipid modification. Composition is skewed to polar residues over residues 171 to 182 (DQATKAKSTQDL) and 242 to 252 (VQPQQASPLET). 3 disordered regions span residues 171–205 (DQAT…STTS), 239–269 (KQDV…PPLP), and 281–333 (SNST…EESK). Residues 302 to 333 (EETKPKDTELSQESDFKENGITEEKSKSEESK) are compositionally biased toward basic and acidic residues. Residues 392-405 (LIETASSLVKNAIQ) form a PKA-RII subunit binding domain region. The segment at 410–427 (QLVNEMASDDNKINNLLQ) is tethers NFATC2 to CRAC channels.

In terms of assembly, binding protein for dimer of the RII-beta regulatory subunit of cAMP-dependent protein kinase (PKA) and also for the protein kinase C (PKC) and the phosphatase calcineurin (PP2B). Each enzyme is inhibited when bound to the anchoring protein. Also binds the beta2-adrenergic receptor. Part of a complex containing AKAP5, ADCY5, ADCY6 and PDE4C. Interacts with ADCY8, and enhances its phosphorylation at lipid rafts. Interacts with ORAI1 (isoform alpha) (via N-terminus) upon store depletion and in response to LTC4. Does not interact with ORAI2 and ORAI3 paralogs. Interacts (via leucine zipper domain) with NFATC2/NFAT1. Interacts with calmodulin; the interaction is calcium-independent. Interacts with KCNQ2; the interaction may help KCNQ2 channel complex to retain calcium-bound calmodulin. Interacts with KCNK2; the channel is recruited to postsynaptic microdomains by AKAP5 where it can integrate neurotransmitter receptor signals. Part of a complex composed of AKAP5 and ADRB2. Palmitoylated. Palmitoylation at Cys-36 and Cys-129 play a key role in the targeting of AKAP5 to lipid rafts. Palmitoylation by ZDHHC2 is required for AKAP5 function in LTP-stimulated recycling endosome exocytosis. Predominantly in the cerebral cortex and the postsynaptic densities of the forebrain, and to a lesser extent in adrenal medulla, lung and anterior pituitary.

The protein resides in the postsynaptic recycling endosome membrane. It is found in the cell projection. It localises to the dendrite. Its subcellular location is the postsynaptic cell membrane. Functionally, multivalent scaffold protein that anchors the cAMP-dependent protein kinase/PKA to cytoskeletal and/or organelle-associated proteins, targeting the signal carried by cAMP to specific intracellular effectors. Association with the beta2-adrenergic receptor (beta2-AR) not only regulates beta2-AR signaling pathway, but also the activation by PKA by switching off the beta2-AR signaling cascade. Plays a role in long term synaptic potentiation by regulating protein trafficking from the dendritic recycling endosomes to the plasma membrane and controlling both structural and functional plasticity at excitatory synapses. In hippocampal pyramidal neurons, recruits KCNK2/TREK-1 channel at postsynaptic dense bodies microdomains and converts it to a leak channel no longer sensitive to stimulation by arachidonic acid, acidic pH or mechanical stress, nor inhibited by Gq-coupled receptors but still under the negative control of Gs-coupled receptors. Associates with ORAI1 pore-forming subunit of CRAC channels in Ca(2+) signaling microdomains where it recruits NFATC2/NFAT1 and couples store-operated Ca(2+) influx to calmodulin and calcineurin signaling and activation of NFAT-dependent transcriptional responses. This Homo sapiens (Human) protein is A-kinase anchor protein 5 (AKAP5).